The following is a 110-amino-acid chain: uncharacterized protein (110 aa).

This is an uncharacterized protein from Enterobacteria phage T4 (Bacteriophage T4).